An 862-amino-acid chain; its full sequence is MQEQYNPQDLEQKVQKHWDDNKTFVVSEDPNKEKFYCLSMFPYPSGRLHMGHVRNYTIGDVVSRFQRLQGKNVMQPIGWDAFGLPAENAAVKNNTAPAPWTYENIEYMKNQLKLLGFGYDWNREFATCTPEYYRWEQEFFTKLYEKGLVYKKTSSVNWCPNDQTVLANEQVEDGCCWRCDTPVEQKEIPQWFIKITEYAQELLDDLDKLEGWPEMVKTMQRNWIGRSEGVELRFALKDSEVKGQQDLEVYTTRPDTLMGVTYVGIAAGHPLATIAAENNPELAAFIEECKNTKVAEAELATMEKKGMATGLTAIHPLNGREVPVYVANFVLMDYGTGAVMAVPAHDQRDFEFATKYGLDIVPVIKPVDGSELDTSEAAYTEKGVLFDSGEFDGLEFQAAFDAIAAKLEAEGKGTKTVNFRLRDWGVSRQRYWGAPIPMVTTEDGEVHPVPADQLPVILPEDVVMDGVTSPIKADKEWAKTTFNGEPALRETDTFDTFMESSWYYARYCSPQADDILAPEKANYWLPVDQYIGGIEHACMHLLYSRFFHKLLRDAGYVTSDEPFKQLLCQGMVLADAFYFENEKGGKEWVAPTDVAVERDGKGRITSAKDTEGRDVTHSGMIKMSKSKNNGIDPQEMVDKYGADTVRLFMMFASPADMTLEWQESGVEGANRFLKRVWKLVNEHTSKGAAEAVDAAALSGDQKALRRDVHKTIAKVTDDIDRRQTFNTAIAAIMELMNKLAKAPQESAQDRVILDEALKAVVAMLYPITPHISYELWAALGEADIDNAAWPTFDEKALVEDEKTIVVQVNGKLRAKLTVAADATKEQVEELGLNDENVTKFTDGLTIRKVIYVPGKLLNIVAN.

A 'HIGH' region motif is present at residues 42–52 (PYPSGRLHMGH). The short motif at 622 to 626 (KMSKS) is the 'KMSKS' region element. Residue K625 coordinates ATP.

It belongs to the class-I aminoacyl-tRNA synthetase family.

The protein resides in the cytoplasm. The enzyme catalyses tRNA(Leu) + L-leucine + ATP = L-leucyl-tRNA(Leu) + AMP + diphosphate. This is Leucine--tRNA ligase from Vibrio campbellii (strain ATCC BAA-1116).